A 156-amino-acid polypeptide reads, in one-letter code: Small ribosomal subunit protein uS7 (156 aa).

Belongs to the universal ribosomal protein uS7 family. As to quaternary structure, part of the 30S ribosomal subunit. Contacts proteins S9 and S11.

Its function is as follows. One of the primary rRNA binding proteins, it binds directly to 16S rRNA where it nucleates assembly of the head domain of the 30S subunit. Is located at the subunit interface close to the decoding center, probably blocks exit of the E-site tRNA. This chain is Small ribosomal subunit protein uS7, found in Kineococcus radiotolerans (strain ATCC BAA-149 / DSM 14245 / SRS30216).